The following is a 538-amino-acid chain: Chaperonin GroEL (538 aa).

ATP is bound by residues 29–32, 86–90, Gly-413, 476–478, and Asp-492; these read TLGP, DGTTT, and NAA.

This sequence belongs to the chaperonin (HSP60) family. Forms a cylinder of 14 subunits composed of two heptameric rings stacked back-to-back. Interacts with the co-chaperonin GroES.

The protein resides in the cytoplasm. The enzyme catalyses ATP + H2O + a folded polypeptide = ADP + phosphate + an unfolded polypeptide.. Functionally, together with its co-chaperonin GroES, plays an essential role in assisting protein folding. The GroEL-GroES system forms a nano-cage that allows encapsulation of the non-native substrate proteins and provides a physical environment optimized to promote and accelerate protein folding. This Bacillus sp. (strain PS3) protein is Chaperonin GroEL.